A 256-amino-acid chain; its full sequence is UPF0246 protein SPO0106 (256 aa).

The protein belongs to the UPF0246 family.

This Ruegeria pomeroyi (strain ATCC 700808 / DSM 15171 / DSS-3) (Silicibacter pomeroyi) protein is UPF0246 protein SPO0106.